Consider the following 518-residue polypeptide: Probable bifunctional methylthioribulose-1-phosphate dehydratase/enolase-phosphatase E1 (518 aa).

The tract at residues 1–242 is methylthioribulose-1-phosphate dehydratase; sequence MACCGGGRGE…AIKLYQLGID (242 aa). Position 114 (C114) interacts with substrate. Zn(2+) is bound by residues H132 and H134. Residue E157 is the Proton donor/acceptor; for methylthioribulose-1-phosphate dehydratase activity of the active site. A Zn(2+)-binding site is contributed by H207. Residues 279-518 are enolase-phosphatase E1; the sequence is VVLDIEGTTT…FRTIKSFSEI (240 aa). Positions 282 and 284 each coordinate Mg(2+). Substrate contacts are provided by residues 417-418 and K451; that span reads SS. Mg(2+) is bound at residue D477.

The protein in the N-terminal section; belongs to the aldolase class II family. MtnB subfamily. In the C-terminal section; belongs to the HAD-like hydrolase superfamily. MasA/MtnC family. The cofactor is Zn(2+). Mg(2+) serves as cofactor.

The enzyme catalyses 5-(methylsulfanyl)-D-ribulose 1-phosphate = 5-methylsulfanyl-2,3-dioxopentyl phosphate + H2O. The catalysed reaction is 5-methylsulfanyl-2,3-dioxopentyl phosphate + H2O = 1,2-dihydroxy-5-(methylsulfanyl)pent-1-en-3-one + phosphate. Its pathway is amino-acid biosynthesis; L-methionine biosynthesis via salvage pathway; L-methionine from S-methyl-5-thio-alpha-D-ribose 1-phosphate: step 2/6. It functions in the pathway amino-acid biosynthesis; L-methionine biosynthesis via salvage pathway; L-methionine from S-methyl-5-thio-alpha-D-ribose 1-phosphate: step 3/6. It participates in amino-acid biosynthesis; L-methionine biosynthesis via salvage pathway; L-methionine from S-methyl-5-thio-alpha-D-ribose 1-phosphate: step 4/6. The sequence is that of Probable bifunctional methylthioribulose-1-phosphate dehydratase/enolase-phosphatase E1 from Oryza sativa subsp. indica (Rice).